A 303-amino-acid polypeptide reads, in one-letter code: Methionyl-tRNA formyltransferase (303 aa).

110–113 (SLLP) provides a ligand contact to (6S)-5,6,7,8-tetrahydrofolate.

The protein belongs to the Fmt family.

The enzyme catalyses L-methionyl-tRNA(fMet) + (6R)-10-formyltetrahydrofolate = N-formyl-L-methionyl-tRNA(fMet) + (6S)-5,6,7,8-tetrahydrofolate + H(+). In terms of biological role, attaches a formyl group to the free amino group of methionyl-tRNA(fMet). The formyl group appears to play a dual role in the initiator identity of N-formylmethionyl-tRNA by promoting its recognition by IF2 and preventing the misappropriation of this tRNA by the elongation apparatus. This Ehrlichia ruminantium (strain Welgevonden) protein is Methionyl-tRNA formyltransferase.